A 340-amino-acid chain; its full sequence is Guanine nucleotide-binding protein G(I)/G(S)/G(T) subunit beta-1 (340 aa).

Residue serine 2 is modified to N-acetylserine. Serine 2 bears the Phosphoserine mark. WD repeat units follow at residues 46–94 (RTRR…HAIP), 95–140 (LRSS…RELA), 141–181 (GHTG…TTFT), 182–223 (GHTG…QTFT), 224–267 (GHES…YSHD), 268–309 (NIIC…GVLA), and 310–340 (GHDNRVSCLGVTDDGMAVATGSWDSFLKIWN). Histidine 266 carries the phosphohistidine modification.

The protein belongs to the WD repeat G protein beta family. In terms of assembly, g proteins are composed of 3 units, alpha, beta and gamma. The heterodimer formed by GNB1 and GNG2 interacts with ARHGEF5. The heterodimer formed by GNB1 and GNG2 interacts with GRK2. Forms a complex with GNAO1 and GNG3. Interacts with ARHGEF18 and RASD2. Forms complexes with TAS2R14 and G-proteins; these complexes play a role in the perception of bitterness. Component of the TAS2R14-GNAI1 complex, consisting of TAS2R14, GNAI1, GNB1 and GNG2. Component of the TAS2R14-GNAT3 complex, consisting of TAS2R14, GNAT3, GNB1 and GNG2. Component of the TAS2R14-GNAS2 complex, consisting of TAS2R14, GNAS2, GNB1 and GNG2. In terms of processing, phosphorylation at His-266 by NDKB contributes to G protein activation by increasing the high energetic phosphate transfer onto GDP.

In terms of biological role, guanine nucleotide-binding proteins (G proteins) are involved as a modulator or transducer in various transmembrane signaling systems. The beta and gamma chains are required for the GTPase activity, for replacement of GDP by GTP, and for G protein-effector interaction. The polypeptide is Guanine nucleotide-binding protein G(I)/G(S)/G(T) subunit beta-1 (GNB1) (Cricetulus griseus (Chinese hamster)).